A 184-amino-acid polypeptide reads, in one-letter code: Holliday junction branch migration complex subunit RuvA (184 aa).

A domain I region spans residues 1 to 64 (MIKAIEGVVT…EDANLLYGFL (64 aa)). A domain II region spans residues 65–134 (DANEQKMFEM…IAELSDTKLI (70 aa)). The flexible linker stretch occupies residues 134-137 (ISDE). The segment at 138–184 (SVPSYQNEALLALEALGFKREKIVKILPDCKSENTSDLIKEALKKLG) is domain III.

It belongs to the RuvA family. In terms of assembly, homotetramer. Forms an RuvA(8)-RuvB(12)-Holliday junction (HJ) complex. HJ DNA is sandwiched between 2 RuvA tetramers; dsDNA enters through RuvA and exits via RuvB. An RuvB hexamer assembles on each DNA strand where it exits the tetramer. Each RuvB hexamer is contacted by two RuvA subunits (via domain III) on 2 adjacent RuvB subunits; this complex drives branch migration. In the full resolvosome a probable DNA-RuvA(4)-RuvB(12)-RuvC(2) complex forms which resolves the HJ.

It is found in the cytoplasm. Functionally, the RuvA-RuvB-RuvC complex processes Holliday junction (HJ) DNA during genetic recombination and DNA repair, while the RuvA-RuvB complex plays an important role in the rescue of blocked DNA replication forks via replication fork reversal (RFR). RuvA specifically binds to HJ cruciform DNA, conferring on it an open structure. The RuvB hexamer acts as an ATP-dependent pump, pulling dsDNA into and through the RuvAB complex. HJ branch migration allows RuvC to scan DNA until it finds its consensus sequence, where it cleaves and resolves the cruciform DNA. The sequence is that of Holliday junction branch migration complex subunit RuvA from Campylobacter concisus (strain 13826).